A 166-amino-acid polypeptide reads, in one-letter code: Phosphopantetheine adenylyltransferase (166 aa).

S11 contacts substrate. ATP contacts are provided by residues 11 to 12 and H19; that span reads SF. The substrate site is built by K43, V80, and R94. ATP is bound by residues 95-97, E105, and 130-136; these read GLR and VRTVTAT.

Belongs to the bacterial CoaD family. As to quaternary structure, homohexamer. The cofactor is Mg(2+).

The protein resides in the cytoplasm. It catalyses the reaction (R)-4'-phosphopantetheine + ATP + H(+) = 3'-dephospho-CoA + diphosphate. It participates in cofactor biosynthesis; coenzyme A biosynthesis; CoA from (R)-pantothenate: step 4/5. Functionally, reversibly transfers an adenylyl group from ATP to 4'-phosphopantetheine, yielding dephospho-CoA (dPCoA) and pyrophosphate. The polypeptide is Phosphopantetheine adenylyltransferase (Chelativorans sp. (strain BNC1)).